The sequence spans 426 residues: Glutamate-1-semialdehyde 2,1-aminomutase (426 aa).

At K265 the chain carries N6-(pyridoxal phosphate)lysine.

It belongs to the class-III pyridoxal-phosphate-dependent aminotransferase family. HemL subfamily. As to quaternary structure, homodimer. Pyridoxal 5'-phosphate serves as cofactor.

Its subcellular location is the cytoplasm. It catalyses the reaction (S)-4-amino-5-oxopentanoate = 5-aminolevulinate. It functions in the pathway porphyrin-containing compound metabolism; protoporphyrin-IX biosynthesis; 5-aminolevulinate from L-glutamyl-tRNA(Glu): step 2/2. The protein is Glutamate-1-semialdehyde 2,1-aminomutase of Enterobacter sp. (strain 638).